We begin with the raw amino-acid sequence, 180 residues long: Virion protein US10 homolog (180 aa).

The protein belongs to the herpesviridae US10 family. Phosphorylated.

It localises to the virion tegument. The protein localises to the host nucleus matrix. In Varicella-zoster virus (strain Dumas) (HHV-3), this protein is Virion protein US10 homolog (64).